Reading from the N-terminus, the 345-residue chain is Phosphoribosylformylglycinamidine cyclo-ligase (345 aa).

It belongs to the AIR synthase family.

It is found in the cytoplasm. The enzyme catalyses 2-formamido-N(1)-(5-O-phospho-beta-D-ribosyl)acetamidine + ATP = 5-amino-1-(5-phospho-beta-D-ribosyl)imidazole + ADP + phosphate + H(+). Its pathway is purine metabolism; IMP biosynthesis via de novo pathway; 5-amino-1-(5-phospho-D-ribosyl)imidazole from N(2)-formyl-N(1)-(5-phospho-D-ribosyl)glycinamide: step 2/2. The sequence is that of Phosphoribosylformylglycinamidine cyclo-ligase from Shewanella baltica (strain OS223).